A 165-amino-acid chain; its full sequence is Phosphopantetheine adenylyltransferase (165 aa).

Ser-9 lines the substrate pocket. ATP-binding positions include 9–10 and His-17; that span reads SF. Lys-41, Ile-75, and Arg-89 together coordinate substrate. Residues 90-92, Glu-100, and 125-131 each bind ATP; these read GVR and YLFVRSD.

It belongs to the bacterial CoaD family. In terms of assembly, homohexamer. Mg(2+) serves as cofactor.

The protein localises to the cytoplasm. It catalyses the reaction (R)-4'-phosphopantetheine + ATP + H(+) = 3'-dephospho-CoA + diphosphate. It participates in cofactor biosynthesis; coenzyme A biosynthesis; CoA from (R)-pantothenate: step 4/5. Its function is as follows. Reversibly transfers an adenylyl group from ATP to 4'-phosphopantetheine, yielding dephospho-CoA (dPCoA) and pyrophosphate. The polypeptide is Phosphopantetheine adenylyltransferase (Borrelia hermsii (strain HS1 / DAH)).